The primary structure comprises 96 residues: Bublin coiled-coil protein (96 aa).

Residues 39–79 (NSCLDDIEDRNDALNGKLHELLESNRQARKDFRQQLNDEEA) adopt a coiled-coil conformation. Residues 63 to 96 (NRQARKDFRQQLNDEEASPPPAEDPASRDTQTED) form a disordered region. Basic and acidic residues predominate over residues 87-96 (PASRDTQTED).

It belongs to the UPF0184 (EST00098) family.

Its subcellular location is the cell junction. It is found in the cytoplasm. The protein localises to the cytoskeleton. Functionally, essential for intermediate filament organization in intestinal cells, interacts with intermediate filament and regulates intestinal lumen morphology. The polypeptide is Bublin coiled-coil protein (bbln) (Ctenopharyngodon idella (Grass carp)).